Reading from the N-terminus, the 300-residue chain is MKNKILKIATRKSQLAICQAQYVHNELKHYHPTLSIELMPIVTTGDKFLNIDAKNKIKKGAFIKELEHALINFRADIAVHSMKDITVPLPDELTLPVLCKRNDPRDAFVSLKYPNIDTLPIGSVIGTSSLRRQCQIRAHRPDLVVSNLRGNIDTRLKKLQYGQYDAIVLAVAGLQRLQLHEYIRVHIDPSDLLPAMGQGVIAIECRSNDADILSLLSPLYHQETSFRVRAERAVTTYLESYCHLPIASYAEIEEDQIWLRALIGLPDGSKIIRTEGRAPLDQAEKLGFILAEDLLIKFKR.

The residue at position 242 (Cys-242) is an S-(dipyrrolylmethanemethyl)cysteine.

This sequence belongs to the HMBS family. As to quaternary structure, monomer. Dipyrromethane is required as a cofactor.

The enzyme catalyses 4 porphobilinogen + H2O = hydroxymethylbilane + 4 NH4(+). It participates in porphyrin-containing compound metabolism; protoporphyrin-IX biosynthesis; coproporphyrinogen-III from 5-aminolevulinate: step 2/4. Functionally, tetrapolymerization of the monopyrrole PBG into the hydroxymethylbilane pre-uroporphyrinogen in several discrete steps. This is Porphobilinogen deaminase from Blochmanniella pennsylvanica (strain BPEN).